We begin with the raw amino-acid sequence, 59 residues long: Potassium channel toxin alpha-KTx 1.14 (59 aa).

The first 22 residues, 1–22 (MKKISFLLLLAIVICSIGWTDG), serve as a signal peptide directing secretion. Q23 carries the post-translational modification Pyrrolidone carboxylic acid. Disulfide bonds link C29–C50, C35–C55, and C39–C57.

This sequence belongs to the short scorpion toxin superfamily. Potassium channel inhibitor family. Alpha-KTx 01 subfamily. As to expression, expressed by the venom gland.

The protein resides in the secreted. In terms of biological role, potent blocker of both large-conductance calcium-activated potassium channels (KCa1.1/KCNMA1) and voltage-gated potassium channels (Kv1.3/KCNA3 and ERG1/Kv11.1/KCNH2). This chain is Potassium channel toxin alpha-KTx 1.14, found in Olivierus martensii (Manchurian scorpion).